Consider the following 125-residue polypeptide: Small ribosomal subunit protein uS13 (125 aa).

Residues 95–125 are disordered; that stretch reads GLPVNGQRTRTNARTRKGGKKTVANKKKVTK. Over residues 105–125 the composition is skewed to basic residues; sequence TNARTRKGGKKTVANKKKVTK.

Belongs to the universal ribosomal protein uS13 family. Part of the 30S ribosomal subunit. Forms a loose heterodimer with protein S19. Forms two bridges to the 50S subunit in the 70S ribosome.

Functionally, located at the top of the head of the 30S subunit, it contacts several helices of the 16S rRNA. In the 70S ribosome it contacts the 23S rRNA (bridge B1a) and protein L5 of the 50S subunit (bridge B1b), connecting the 2 subunits; these bridges are implicated in subunit movement. Contacts the tRNAs in the A and P-sites. In Leptospira borgpetersenii serovar Hardjo-bovis (strain L550), this protein is Small ribosomal subunit protein uS13.